The sequence spans 403 residues: NADH-quinone oxidoreductase subunit D (403 aa).

It belongs to the complex I 49 kDa subunit family. NDH-1 is composed of 15 different subunits. Subunits NuoB, C, D, E, F, and G constitute the peripheral sector of the complex.

It localises to the cell membrane. It catalyses the reaction a quinone + NADH + 5 H(+)(in) = a quinol + NAD(+) + 4 H(+)(out). In terms of biological role, NDH-1 shuttles electrons from NADH, via FMN and iron-sulfur (Fe-S) centers, to quinones in the respiratory chain. The immediate electron acceptor for the enzyme in this species is believed to be a menaquinone. Couples the redox reaction to proton translocation (for every two electrons transferred, four hydrogen ions are translocated across the cytoplasmic membrane), and thus conserves the redox energy in a proton gradient. The chain is NADH-quinone oxidoreductase subunit D from Deinococcus geothermalis (strain DSM 11300 / CIP 105573 / AG-3a).